Here is a 367-residue protein sequence, read N- to C-terminus: Peptide chain release factor 2 (367 aa).

Q254 is modified (N5-methylglutamine).

Belongs to the prokaryotic/mitochondrial release factor family. In terms of processing, methylated by PrmC. Methylation increases the termination efficiency of RF2.

It is found in the cytoplasm. Functionally, peptide chain release factor 2 directs the termination of translation in response to the peptide chain termination codons UGA and UAA. This chain is Peptide chain release factor 2, found in Burkholderia mallei (strain ATCC 23344).